We begin with the raw amino-acid sequence, 230 residues long: Vacuole-localized protein 4 (230 aa).

The N-terminal stretch at 1–19 (MRVSSAIFTIASGIAAVSA) is a signal peptide.

Its subcellular location is the vacuole. In terms of biological role, vacuolar protein required for aerial conidiation and conidial maturation. Also involved in blastospore production and cell cycle. Plays a vital role in the secretion of Pr1 proteases for cuticular penetration and hence contributes significantly to host infection and virulence. The chain is Vacuole-localized protein 4 from Beauveria bassiana (strain ARSEF 2860) (White muscardine disease fungus).